A 1342-amino-acid polypeptide reads, in one-letter code: Zinc finger protein 335 (1342 aa).

Disordered regions lie at residues 1 to 102 (MEEN…VTGG) and 201 to 228 (TSTS…AEEP). The span at 34-49 (AVSADSSDAAAAPGQA) shows a compositional bias: low complexity. The span at 201–217 (TSTSTCLEAQGGPSSPV) shows a compositional bias: polar residues. A C2H2-type 1 zinc finger spans residues 245 to 268 (FKCKMCQYRSSTKATLLRHMRERH). The interval 274-442 (AAAAAAGKKG…TLPRRRGRPS (169 aa)) is disordered. Acidic residues predominate over residues 297-327 (EEGPEEEDDDDIVDAGAIDDLEEDSDYNPAE). Residues 346 to 357 (RPRRRPGRPRKL) show a composition bias toward basic residues. C2H2-type zinc fingers lie at residues 465-487 (FLCR…VNSH), 495-517 (FKCL…MFNH), 523-545 (YKCD…AAVH), 562-584 (FPCP…MKTH), 590-612 (HMCD…LLTH), 621-643 (FKCE…QLSH), 649-672 (FKCS…AVKH), and 678-701 (FACE…RCRH). Disordered stretches follow at residues 732 to 763 (LKQQ…QSSE) and 964 to 1013 (CGGL…SAAT). Over residues 740–753 (PGPPPSSPGPPEIP) the composition is skewed to pro residues. S976, S992, and S1007 each carry phosphoserine. Over residues 986–997 (SQSSASSPPATS) the composition is skewed to low complexity. 4 consecutive C2H2-type zinc fingers follow at residues 1019-1041 (FSCK…KRAH), 1047-1069 (FKCP…MAQH), 1075-1097 (HQCS…MLTH), and 1103-1126 (FACH…QRLH). Residue K1022 forms a Glycyl lysine isopeptide (Lys-Gly) (interchain with G-Cter in SUMO2) linkage. An involved in the interaction with CCAR2 region spans residues 1041–1342 (HAGPGAFKCP…EYDVITLADD (302 aa)). S1153 is modified (phosphoserine).

It belongs to the krueppel C2H2-type zinc-finger protein family. Interacts with NCOA6; may enhance ligand-dependent transcriptional activation by nuclear hormone receptors. Interacts with CNOT6. Interacts with CNOT9; the interaction is direct. Component of a nuclear receptor-mediated transcription complex composed of at least ZNF335, CCAR2 and EMSY; the complex stimulates the transcription of nuclear receptor target genes such as SOX9 and HOXA1. Within the complex interacts with EMSY and interacts (via C-terminus) with CCAR2. Interacts with members of histone H3'Lys4'(H3K4) methyltransferase complexes ASH2L, CXXC1, KMT2A/MLL1, RBBP5, SETD1A and WDR5. Component of a histone methylation complex composed of at least ZNF335, RBBP5, ASH2L and WDR5; the complex may have histone H3-specific methyltransferase activity, however does not have specificity for 'Lys-4' of histone H3. Interacts with RBBP5 and WDR5. Interacts with ASHL2. Components of this complex may associate with components of the ZNF335-CCAR2-EMSY nuclear receptor-mediated transcription complex to form a complex at least composed of ZNF335, HCFC1, CCAR2, EMSY, MKI67, RBBP5, ASH2L and WDR5. Within this complex also interacts with HCFC1 and MKI67. In terms of tissue distribution, ubiquitously expressed.

The protein localises to the nucleus. In terms of biological role, component or associated component of some histone methyltransferase complexes may regulate transcription through recruitment of those complexes on gene promoters. Enhances ligand-dependent transcriptional activation by nuclear hormone receptors. Plays an important role in neural progenitor cell proliferation and self-renewal through the regulation of specific genes involved brain development, including REST. Also controls the expression of genes involved in somatic development and regulates, for instance, lymphoblast proliferation. The protein is Zinc finger protein 335 (ZNF335) of Homo sapiens (Human).